The chain runs to 391 residues: Immediate-early protein 2 (391 aa).

Belongs to the herpesviridae US22 family.

The protein resides in the host cytoplasm. It is found in the host nucleus. Functionally, involved in the reactivation of latent MCMV in spleen cells. This is Immediate-early protein 2 (IE2) from Murid herpesvirus 1 (strain Smith) (MuHV-1).